Reading from the N-terminus, the 410-residue chain is Transforming growth factor beta-3 proprotein (410 aa).

The first 23 residues, 1–23 (MHLQRALVVLALLNLATISLSLS), serve as a signal peptide directing secretion. Residues Asn-72, Asn-133, and Asn-140 are each glycosylated (N-linked (GlcNAc...) asparagine). The Cell attachment site motif lies at 259 to 261 (RGD). Residue Gln-291 is modified to N5-methylglutamine. Cystine bridges form between Cys-305-Cys-314, Cys-313-Cys-376, Cys-342-Cys-407, and Cys-346-Cys-409.

It belongs to the TGF-beta family. In terms of assembly, interacts with ASPN. Latency-associated peptide: Homodimer; disulfide-linked. Latency-associated peptide: Interacts with Transforming growth factor beta-3 (TGF-beta-3) chain; interaction is non-covalent and maintains (TGF-beta-3) in a latent state. Latency-associated peptide: Interacts with LRRC32/GARP; leading to regulate activation of TGF-beta-3 and promote epithelial fusion during palate development. Latency-associated peptide: Interacts (via cell attachment site) with integrins, leading to release of the active TGF-beta-3. Transforming growth factor beta-3: Homodimer; disulfide-linked. Transforming growth factor beta-3: Interacts with TGF-beta receptors (TGFBR1 and TGFBR2), leading to signal transduction. Post-translationally, transforming growth factor beta-3 proprotein: The precursor proprotein is cleaved in the Golgi apparatus to form Transforming growth factor beta-3 (TGF-beta-3) and Latency-associated peptide (LAP) chains, which remain non-covalently linked, rendering TGF-beta-3 inactive. Methylated at Gln-291 by N6AMT1. Expressed in mammary glands with a slight increase in expression prior to lactation and again increasing at the onset of involution, expression peaks at day 3 of involution.

The protein resides in the secreted. It localises to the extracellular space. The protein localises to the extracellular matrix. Functionally, transforming growth factor beta-3 proprotein: Precursor of the Latency-associated peptide (LAP) and Transforming growth factor beta-3 (TGF-beta-3) chains, which constitute the regulatory and active subunit of TGF-beta-3, respectively. In terms of biological role, required to maintain the Transforming growth factor beta-3 (TGF-beta-3) chain in a latent state during storage in extracellular matrix. Associates non-covalently with TGF-beta-3 and regulates its activation via interaction with 'milieu molecules', such as LTBP1 and LRRC32/GARP, that control activation of TGF-beta-3. Interaction with integrins results in distortion of the Latency-associated peptide chain and subsequent release of the active TGF-beta-3. Transforming growth factor beta-3: Multifunctional protein that regulates embryogenesis and cell differentiation and is required in various processes such as secondary palate development. Activation into mature form follows different steps: following cleavage of the proprotein in the Golgi apparatus, Latency-associated peptide (LAP) and Transforming growth factor beta-3 (TGF-beta-3) chains remain non-covalently linked rendering TGF-beta-3 inactive during storage in extracellular matrix. At the same time, LAP chain interacts with 'milieu molecules', such as LTBP1 and LRRC32/GARP that control activation of TGF-beta-3 and maintain it in a latent state during storage in extracellular milieus. TGF-beta-3 is released from LAP by integrins: integrin-binding results in distortion of the LAP chain and subsequent release of the active TGF-beta-3. Once activated following release of LAP, TGF-beta-3 acts by binding to TGF-beta receptors (TGFBR1 and TGFBR2), which transduce signal. The sequence is that of Transforming growth factor beta-3 proprotein from Mus musculus (Mouse).